A 100-amino-acid chain; its full sequence is Omega-hexatoxin-Asp2b (100 aa).

A signal peptide spans methionine 1–glycine 23. A propeptide spanning residues methionine 24–glutamate 55 is cleaved from the precursor. Disulfide bonds link cysteine 60–cysteine 73, cysteine 66–cysteine 79, and cysteine 72–cysteine 84.

The protein belongs to the neurotoxin 15 family. 02 (omega-actx) subfamily. In terms of tissue distribution, expressed by the venom gland.

It localises to the secreted. Its function is as follows. Potent inhibitor of insect, but not mammalian, voltage-gated calcium channels (Cav). The sequence is that of Omega-hexatoxin-Asp2b from Atrax sp. (strain Illawarra) (Funnel-web spider).